A 203-amino-acid polypeptide reads, in one-letter code: Monothiol glutaredoxin-7 (203 aa).

The first 32 residues, 1–32 (MAIVINKRNVRVLVITNLLLIVVFFVLRNSNA), serve as a signal peptide directing secretion. Residues 88–191 (AAEYNKIMEQ…DSFKKWSDGA (104 aa)) form the Glutaredoxin domain. Cys-108 serves as a coordination point for [2Fe-2S] cluster.

The protein belongs to the glutaredoxin family. Monothiol subfamily.

This chain is Monothiol glutaredoxin-7 (GRX7), found in Saccharomyces cerevisiae (strain ATCC 204508 / S288c) (Baker's yeast).